A 134-amino-acid polypeptide reads, in one-letter code: MKTIKVSVVTPDGPVYEADVEMVSAKAQSGELGVLPGHIPMVAPLEIGAVRLKKGNATELVAVSGGFLEVRPDRVTILAQAAERAEDIDVARAKAAKERAERRLQAKQEDIDHKRAELALRRAINRLNVANRNF.

Belongs to the ATPase epsilon chain family. F-type ATPases have 2 components, CF(1) - the catalytic core - and CF(0) - the membrane proton channel. CF(1) has five subunits: alpha(3), beta(3), gamma(1), delta(1), epsilon(1). CF(0) has three main subunits: a, b and c.

Its subcellular location is the cell membrane. Produces ATP from ADP in the presence of a proton gradient across the membrane. The polypeptide is ATP synthase epsilon chain (Anoxybacillus flavithermus (strain DSM 21510 / WK1)).